The following is a 353-amino-acid chain: UPF0283 membrane protein YcjF (353 aa).

A compositionally biased stretch (basic and acidic residues) spans 1 to 19 (MSEPLKPRIDFAEPLKEEP). The segment at 1–35 (MSEPLKPRIDFAEPLKEEPTSAFKAQQTFSEAESR) is disordered. A run of 3 helical transmembrane segments spans residues 70–90 (MVMG…IQWT), 100–120 (VALG…GSVV), and 213–233 (ESTL…FIAW).

The protein belongs to the UPF0283 family.

The protein localises to the cell inner membrane. This chain is UPF0283 membrane protein YcjF, found in Salmonella agona (strain SL483).